The sequence spans 281 residues: sn-glycerol-3-phosphate transport system permease protein UgpE (281 aa).

6 helical membrane passes run 16 to 36 (LILG…AATL), 85 to 105 (FSIT…IVWF), 113 to 133 (FFWM…FPTV), 142 to 162 (LNSY…TFLF), 202 to 222 (ALFV…LLII), and 247 to 267 (WNQV…IVLA). The ABC transmembrane type-1 domain occupies 77–268 (MLNSFIMAFS…IPPVVIVLAM (192 aa)).

This sequence belongs to the binding-protein-dependent transport system permease family. UgpAE subfamily. In terms of assembly, the complex is composed of two ATP-binding proteins (UgpC), two transmembrane proteins (UgpA and UgpE) and a solute-binding protein (UgpB).

The protein localises to the cell inner membrane. Part of the ABC transporter complex UgpBAEC involved in sn-glycerol-3-phosphate (G3P) import. Probably responsible for the translocation of the substrate across the membrane. This chain is sn-glycerol-3-phosphate transport system permease protein UgpE (ugpE), found in Salmonella typhi.